A 442-amino-acid chain; its full sequence is Interferon-related developmental regulator 2 (442 aa).

The span at 1 to 15 shows a compositional bias: basic residues; that stretch reads MPRARKGNTLRKGGQ. Positions 1-71 are disordered; that stretch reads MPRARKGNTL…DVVDEQGQQE (71 aa). Residues 43 to 56 show a composition bias toward polar residues; it reads TASECPSLLSTTAE.

The protein belongs to the IFRD family. As to quaternary structure, associates with ribosomes; promoting ribosome inactivation. In terms of tissue distribution, expressed in many tissues including heart, brain, placenta, lung, liver, skeletal muscle, kidney and pancreas.

Ribosome-binding protein that acts as an inhibitor of mRNA translation by promoting ribosome inactivation. Associates with the P- and E-sites of the ribosome and inserts a C-terminal helix into the mRNA exit channel to preclude translation. This is Interferon-related developmental regulator 2 from Homo sapiens (Human).